We begin with the raw amino-acid sequence, 103 residues long: Pyrimidine/purine nucleoside phosphorylase (103 aa).

The protein belongs to the nucleoside phosphorylase PpnP family.

The catalysed reaction is a purine D-ribonucleoside + phosphate = a purine nucleobase + alpha-D-ribose 1-phosphate. The enzyme catalyses adenosine + phosphate = alpha-D-ribose 1-phosphate + adenine. It carries out the reaction cytidine + phosphate = cytosine + alpha-D-ribose 1-phosphate. It catalyses the reaction guanosine + phosphate = alpha-D-ribose 1-phosphate + guanine. The catalysed reaction is inosine + phosphate = alpha-D-ribose 1-phosphate + hypoxanthine. The enzyme catalyses thymidine + phosphate = 2-deoxy-alpha-D-ribose 1-phosphate + thymine. It carries out the reaction uridine + phosphate = alpha-D-ribose 1-phosphate + uracil. It catalyses the reaction xanthosine + phosphate = alpha-D-ribose 1-phosphate + xanthine. Functionally, catalyzes the phosphorolysis of diverse nucleosides, yielding D-ribose 1-phosphate and the respective free bases. Can use uridine, adenosine, guanosine, cytidine, thymidine, inosine and xanthosine as substrates. Also catalyzes the reverse reactions. The sequence is that of Pyrimidine/purine nucleoside phosphorylase from Shewanella sp. (strain ANA-3).